Reading from the N-terminus, the 169-residue chain is E1B protein, small T-antigen (169 aa).

This sequence belongs to the adenoviridae E1B 19 kDa protein family.

The chain is E1B protein, small T-antigen from Canis lupus familiaris (Dog).